Here is a 688-residue protein sequence, read N- to C-terminus: Polyphosphate kinase (688 aa).

ATP is bound at residue Asn45. 2 residues coordinate Mg(2+): Arg375 and Arg405. Residues Pro430–Thr464 form the PLD phosphodiesterase domain. His435 acts as the Phosphohistidine intermediate in catalysis. 3 residues coordinate ATP: Tyr468, Arg564, and His592.

Belongs to the polyphosphate kinase 1 (PPK1) family. It depends on Mg(2+) as a cofactor. Post-translationally, an intermediate of this reaction is the autophosphorylated ppk in which a phosphate is covalently linked to a histidine residue through a N-P bond.

It carries out the reaction [phosphate](n) + ATP = [phosphate](n+1) + ADP. In terms of biological role, catalyzes the reversible transfer of the terminal phosphate of ATP to form a long-chain polyphosphate (polyP). The chain is Polyphosphate kinase from Salmonella typhimurium (strain LT2 / SGSC1412 / ATCC 700720).